A 350-amino-acid chain; its full sequence is Heat-inducible transcription repressor HrcA (350 aa).

It belongs to the HrcA family.

In terms of biological role, negative regulator of class I heat shock genes (grpE-dnaK-dnaJ and groELS operons). Prevents heat-shock induction of these operons. The polypeptide is Heat-inducible transcription repressor HrcA (Limosilactobacillus reuteri (strain DSM 20016) (Lactobacillus reuteri)).